The chain runs to 118 residues: UPF0449 protein C19orf25 (118 aa).

Tyr-63 carries the phosphotyrosine modification. The stretch at 81-109 forms a coiled coil; it reads NVLRQRCELLQRAGEDLEREVAQMKQAAL.

It belongs to the UPF0449 family.

The chain is UPF0449 protein C19orf25 (C19orf25) from Homo sapiens (Human).